Reading from the N-terminus, the 59-residue chain is MDHHLLEIIACPICNGKLHFDKKNLELICQTDELAYPISNGIPVLLESHARDLSSLEKK.

Belongs to the UPF0434 family.

In Hamiltonella defensa subsp. Acyrthosiphon pisum (strain 5AT), this protein is UPF0434 protein HDEF_0234.